An 809-amino-acid polypeptide reads, in one-letter code: Zygotic DNA replication licensing factor mcm3 (809 aa).

Residues 297-504 form the MCM domain; sequence IFEQLSRSLA…QDREISDHVL (208 aa). 347–354 is a binding site for ATP; sequence GDPSVAKS. Positions 479 to 482 match the Arginine finger motif; it reads SRFD. Positions 664 to 741 are disordered; it reads KKRRRRDEDS…TDSSAKPGLS (78 aa). Over residues 696-705 the composition is skewed to basic and acidic residues; the sequence is AQEGESHDPY.

The protein belongs to the MCM family. As to quaternary structure, component of the mcm2-7 complex (RLF-M). The complex forms a toroidal hexameric ring with the proposed subunit order mcm2-mcm6-mcm4-mcm7-mcm3-mcm5. Component of the CMG helicase complex, composed of the mcm2-7 complex, the GINS complex and cdc45.

The protein localises to the nucleus. It is found in the chromosome. It catalyses the reaction ATP + H2O = ADP + phosphate + H(+). In terms of biological role, acts as a component of the MCM2-7 complex (MCM complex) which is the putative replicative helicase essential for 'once per cell cycle' DNA replication initiation and elongation in eukaryotic cells. The active ATPase sites in the MCM2-7 ring are formed through the interaction surfaces of two neighboring subunits such that a critical structure of a conserved arginine finger motif is provided in trans relative to the ATP-binding site of the Walker A box of the adjacent subunit. The six ATPase active sites, however, are likely to contribute differentially to the complex helicase activity. The existence of maternal and zygotic forms of mcm3 and mcm6 suggests that specific forms of mcm2-7 complexes may be used during different stages of development. The sequence is that of Zygotic DNA replication licensing factor mcm3 (zmcm3) from Xenopus tropicalis (Western clawed frog).